The sequence spans 321 residues: MSRYSRIAGTGGYLPRQVVTNDDLAMRVETSDEWIVERTGIRRRHIAAADETASSMAEIASRQALEAAAIDPHDLDLIILATSSPDRVFPSTACLLQQRLGVRSCAAFDVQAACSGFIFALSIADQYISAGNANRVLVVGTEVNSRSVDWDDRSTCILFGDGAGAVVLESATEPGIMSTHIHSDGHYQDLLYLPNPASNGEGSDESRTIRMQGSEVFKVAVNTLGRIVDETLEQNGLQKSDVDWLVPHQANIRIIAATAKKLQLPMERVVVTVDEQGNTSSASIPLAFDEAVRDGRIKRGQTVLMEAFGGGFAWGSALLRY.

Active-site residues include C114 and H248. Positions 249 to 253 (QANIR) are ACP-binding. Residue N278 is part of the active site.

This sequence belongs to the thiolase-like superfamily. FabH family. As to quaternary structure, homodimer.

The protein localises to the cytoplasm. The catalysed reaction is malonyl-[ACP] + acetyl-CoA + H(+) = 3-oxobutanoyl-[ACP] + CO2 + CoA. Its pathway is lipid metabolism; fatty acid biosynthesis. Its function is as follows. Catalyzes the condensation reaction of fatty acid synthesis by the addition to an acyl acceptor of two carbons from malonyl-ACP. Catalyzes the first condensation reaction which initiates fatty acid synthesis and may therefore play a role in governing the total rate of fatty acid production. Possesses both acetoacetyl-ACP synthase and acetyl transacylase activities. Its substrate specificity determines the biosynthesis of branched-chain and/or straight-chain of fatty acids. The chain is Beta-ketoacyl-[acyl-carrier-protein] synthase III from Methylococcus capsulatus (strain ATCC 33009 / NCIMB 11132 / Bath).